Reading from the N-terminus, the 359-residue chain is tRNA-specific 2-thiouridylase MnmA (359 aa).

Residues 11 to 18 (GISGGVDS) and isoleucine 37 each bind ATP. Cysteine 99 (nucleophile) is an active-site residue. A disulfide bridge links cysteine 99 with cysteine 195. Glycine 123 is an ATP binding site. Positions 145 to 147 (KDQ) are interaction with tRNA. The active-site Cysteine persulfide intermediate is cysteine 195. The segment at 304-305 (RY) is interaction with tRNA.

The protein belongs to the MnmA/TRMU family.

It is found in the cytoplasm. It carries out the reaction S-sulfanyl-L-cysteinyl-[protein] + uridine(34) in tRNA + AH2 + ATP = 2-thiouridine(34) in tRNA + L-cysteinyl-[protein] + A + AMP + diphosphate + H(+). In terms of biological role, catalyzes the 2-thiolation of uridine at the wobble position (U34) of tRNA, leading to the formation of s(2)U34. In Chlorobium phaeobacteroides (strain BS1), this protein is tRNA-specific 2-thiouridylase MnmA.